A 101-amino-acid chain; its full sequence is NADH-quinone oxidoreductase subunit K (101 aa).

Transmembrane regions (helical) follow at residues 4–24, 30–50, and 61–81; these read LTHYLVLAAVMFAISVLGIFL, IVLLMAIELMLLAVNFNFIAF, and IFVFFVLTVAAAESAIGLAIL.

The protein belongs to the complex I subunit 4L family. As to quaternary structure, NDH-1 is composed of 14 different subunits. Subunits NuoA, H, J, K, L, M, N constitute the membrane sector of the complex.

The protein resides in the cell inner membrane. It carries out the reaction a quinone + NADH + 5 H(+)(in) = a quinol + NAD(+) + 4 H(+)(out). NDH-1 shuttles electrons from NADH, via FMN and iron-sulfur (Fe-S) centers, to quinones in the respiratory chain. The immediate electron acceptor for the enzyme in this species is believed to be ubiquinone. Couples the redox reaction to proton translocation (for every two electrons transferred, four hydrogen ions are translocated across the cytoplasmic membrane), and thus conserves the redox energy in a proton gradient. The protein is NADH-quinone oxidoreductase subunit K of Laribacter hongkongensis (strain HLHK9).